The chain runs to 314 residues: Ketimine reductase mu-crystallin (314 aa).

Arg-47 provides a ligand contact to 3,3',5-triiodo-L-thyronine. NADPH is bound by residues Ser-91, His-92, Arg-119, Ala-144, Val-146, Gln-147, Asn-168, Arg-169, Thr-170, Asn-173, Thr-205, Met-206, and Val-226. Glu-257 is a binding site for 3,3',5-triiodo-L-thyronine. Ser-292 is a binding site for NADPH.

Belongs to the ornithine cyclodeaminase/mu-crystallin family. As to quaternary structure, homodimer. Binds the thyroid hormone triiodothyronine (T3); T3 binding inhibits enzymatic activity. In terms of tissue distribution, expressed at high abundance in lens, but outside the lens it is preferentially expressed in neural tissues, retina and brain.

Its subcellular location is the cytoplasm. It catalyses the reaction L-pipecolate + NADP(+) = Delta(1)-piperideine-2-carboxylate + NADPH + H(+). The catalysed reaction is L-pipecolate + NAD(+) = Delta(1)-piperideine-2-carboxylate + NADH + H(+). It carries out the reaction L-proline + NADP(+) = 1-pyrroline-2-carboxylate + NADPH + H(+). The enzyme catalyses L-proline + NAD(+) = 1-pyrroline-2-carboxylate + NADH + H(+). It catalyses the reaction (3R)-1,4-thiomorpholine-3-carboxylate + NAD(+) = 3,4-dehydrothiomorpholine-3-carboxylate + NADH + 2 H(+). The catalysed reaction is (3R)-1,4-thiomorpholine-3-carboxylate + NADP(+) = 3,4-dehydrothiomorpholine-3-carboxylate + NADPH + 2 H(+). It carries out the reaction (S)-cystathionine ketimine + NADH + 2 H(+) = (3R,5S)-2,3,5,6,7-pentahydro-1,4-thiazepine-3,5-dicarboxylate + NAD(+). The enzyme catalyses (S)-cystathionine ketimine + NADPH + 2 H(+) = (3R,5S)-2,3,5,6,7-pentahydro-1,4-thiazepine-3,5-dicarboxylate + NADP(+). It catalyses the reaction (R)-lanthionine ketimine + NADPH + 2 H(+) = (3R,5R)-1,4-thiomorpholine-3,5-dicarboxylate + NADP(+). The catalysed reaction is Delta(2)-thiazoline-2-carboxylate + NADPH + 2 H(+) = L-thiazolidine-2-carboxylate + NADP(+). Functionally, catalyzes the NAD(P)H-dependent reduction of imine double bonds of a number of cyclic ketimine substrates, including sulfur-containing cyclic ketimines. Under physiological conditions, it efficiently catalyzes delta(1)-piperideine-2-carboxylate (P2C) and delta(1)-pyrroline-2-carboxylate (Pyr2C) reduction, suggesting a central role in lysine and glutamate metabolism. Additional substrates are delta(2)-thiazoline-2-carboxylate (T2C), 3,4-dehydrothiomorpholine-3-carboxylate (AECK), and (R)-lanthionine ketimine (LK) that is reduced at very low rate compared to other substrates. Also catalyzes the NAD(P)H-dependent reduction of (S)-cystathionine ketimine (CysK). This is Ketimine reductase mu-crystallin (CRYM) from Macropus fuliginosus (Western gray kangaroo).